The sequence spans 465 residues: Putative mannose-1-phosphate guanylyltransferase (465 aa).

This sequence belongs to the mannose-6-phosphate isomerase type 2 family.

The catalysed reaction is alpha-D-mannose 1-phosphate + GTP + H(+) = GDP-alpha-D-mannose + diphosphate. It functions in the pathway nucleotide-sugar biosynthesis; GDP-alpha-D-mannose biosynthesis; GDP-alpha-D-mannose from alpha-D-mannose 1-phosphate (GTP route): step 1/1. It participates in bacterial outer membrane biogenesis; LPS O-antigen biosynthesis. The sequence is that of Putative mannose-1-phosphate guanylyltransferase (rfbA) from Vibrio cholerae serotype O1 (strain ATCC 39315 / El Tor Inaba N16961).